A 371-amino-acid polypeptide reads, in one-letter code: Histidinol-phosphate aminotransferase (371 aa).

At lysine 228 the chain carries N6-(pyridoxal phosphate)lysine.

This sequence belongs to the class-II pyridoxal-phosphate-dependent aminotransferase family. Histidinol-phosphate aminotransferase subfamily. The cofactor is pyridoxal 5'-phosphate.

The enzyme catalyses L-histidinol phosphate + 2-oxoglutarate = 3-(imidazol-4-yl)-2-oxopropyl phosphate + L-glutamate. It functions in the pathway amino-acid biosynthesis; L-histidine biosynthesis; L-histidine from 5-phospho-alpha-D-ribose 1-diphosphate: step 7/9. This chain is Histidinol-phosphate aminotransferase, found in Methanococcus maripaludis (strain C7 / ATCC BAA-1331).